We begin with the raw amino-acid sequence, 471 residues long: Alpha-galactosidase 1 (471 aa).

The signal sequence occupies residues Met-1–Gly-18. Cys-42 and Cys-74 are disulfide-bonded. Asp-72 and Asp-73 together coordinate substrate. N-linked (GlcNAc...) asparagine glycosylation occurs at Asn-105. A disulfide bridge connects residues Cys-121 and Cys-151. Lys-147 is a binding site for substrate. Asp-149 (nucleophile) is an active-site residue. N-linked (GlcNAc...) asparagine glycosylation occurs at Asn-175. Arg-205 is a substrate binding site. Catalysis depends on Asp-209, which acts as the Proton donor. Disulfide bonds link Cys-221–Cys-237 and Cys-223–Cys-230. Residue Gln-251 participates in substrate binding. Residues Asn-270, Asn-370, Asn-403, Asn-413, Asn-422, Asn-435, and Asn-454 are each glycosylated (N-linked (GlcNAc...) asparagine).

It belongs to the glycosyl hydrolase 27 family. Homotetramer.

It localises to the secreted. It catalyses the reaction Hydrolysis of terminal, non-reducing alpha-D-galactose residues in alpha-D-galactosides, including galactose oligosaccharides, galactomannans and galactolipids.. The polypeptide is Alpha-galactosidase 1 (MEL1) (Saccharomyces cerevisiae (Baker's yeast)).